The chain runs to 529 residues: Ectonucleoside triphosphate diphosphohydrolase 3 (529 aa).

Over 1–22 (MFTVLTRQPCEQAGLKALYRTP) the chain is Cytoplasmic. Residues 23-43 (TIIALVVLLVSIVVLVSITVI) form a helical membrane-spanning segment. At 44–485 (QIHKQEVLPP…PLIRLPIEPP (442 aa)) the chain is on the extracellular side. Asn-81 carries an N-linked (GlcNAc...) asparagine glycan. A disulfide bridge connects residues Cys-92 and Cys-116. The N-linked (GlcNAc...) asparagine glycan is linked to Asn-149. The Proton acceptor role is filled by Glu-182. ATP is bound at residue 222 to 226 (GASTQ). N-linked (GlcNAc...) asparagine glycosylation occurs at Asn-238. Disulfide bonds link Cys-261–Cys-308, Cys-289–Cys-334, and Cys-347–Cys-353. Asn-381, Asn-392, Asn-402, and Asn-454 each carry an N-linked (GlcNAc...) asparagine glycan. A disulfide bridge connects residues Cys-399 and Cys-422. The helical transmembrane segment at 486-506 (VFVGTLAFFTAAALLCLAFLA) threads the bilayer. Residues 507 to 529 (YLCSATRRKRHSEHAFDHAVDSD) are Cytoplasmic-facing.

This sequence belongs to the GDA1/CD39 NTPase family. Requires Ca(2+) as cofactor. The cofactor is Mg(2+). As to expression, expressed in adult brain, pancreas, spleen and prostate. Moderate or low expression is seen in most tissues. Not expressed in liver and peripheral blood leukocytes.

Its subcellular location is the cell membrane. It carries out the reaction a ribonucleoside 5'-triphosphate + 2 H2O = a ribonucleoside 5'-phosphate + 2 phosphate + 2 H(+). Its function is as follows. Has a threefold preference for the hydrolysis of ATP over ADP. The sequence is that of Ectonucleoside triphosphate diphosphohydrolase 3 (ENTPD3) from Homo sapiens (Human).